The chain runs to 1152 residues: DNA-directed RNA polymerase subunit beta (1152 aa).

The protein belongs to the RNA polymerase beta chain family. In terms of assembly, the RNAP catalytic core consists of 2 alpha, 1 beta, 1 beta' and 1 omega subunit. When a sigma factor is associated with the core the holoenzyme is formed, which can initiate transcription.

It catalyses the reaction RNA(n) + a ribonucleoside 5'-triphosphate = RNA(n+1) + diphosphate. In terms of biological role, DNA-dependent RNA polymerase catalyzes the transcription of DNA into RNA using the four ribonucleoside triphosphates as substrates. The polypeptide is DNA-directed RNA polymerase subunit beta (Deinococcus geothermalis (strain DSM 11300 / CIP 105573 / AG-3a)).